We begin with the raw amino-acid sequence, 184 residues long: Photosystem I assembly protein Ycf4 (184 aa).

2 consecutive transmembrane segments (helical) span residues 19-39 (ISNFCWAFILFLGSLGFLLVG) and 57-77 (IIFFPQGIVMSFYGIAGLFIS).

This sequence belongs to the Ycf4 family.

Its subcellular location is the plastid. The protein localises to the chloroplast thylakoid membrane. Seems to be required for the assembly of the photosystem I complex. The protein is Photosystem I assembly protein Ycf4 of Cucumis sativus (Cucumber).